We begin with the raw amino-acid sequence, 314 residues long: Aspartate carbamoyltransferase catalytic subunit (314 aa).

Residues Arg55 and Thr56 each coordinate carbamoyl phosphate. Lys83 is a binding site for L-aspartate. 3 residues coordinate carbamoyl phosphate: Arg105, His139, and Gln142. Residues Arg172 and Arg226 each contribute to the L-aspartate site. Carbamoyl phosphate contacts are provided by Gly267 and Pro268.

The protein belongs to the aspartate/ornithine carbamoyltransferase superfamily. ATCase family. Heterododecamer (2C3:3R2) of six catalytic PyrB chains organized as two trimers (C3), and six regulatory PyrI chains organized as three dimers (R2).

It catalyses the reaction carbamoyl phosphate + L-aspartate = N-carbamoyl-L-aspartate + phosphate + H(+). The protein operates within pyrimidine metabolism; UMP biosynthesis via de novo pathway; (S)-dihydroorotate from bicarbonate: step 2/3. Catalyzes the condensation of carbamoyl phosphate and aspartate to form carbamoyl aspartate and inorganic phosphate, the committed step in the de novo pyrimidine nucleotide biosynthesis pathway. This is Aspartate carbamoyltransferase catalytic subunit from Rhodococcus opacus (strain B4).